Reading from the N-terminus, the 320-residue chain is GTP 3',8-cyclase (320 aa).

Positions 4–227 constitute a Radical SAM core domain; the sequence is LYSRRINYMR…METEKSSPAK (224 aa). Position 13 (R13) interacts with GTP. C20 and C24 together coordinate [4Fe-4S] cluster. Y26 serves as a coordination point for S-adenosyl-L-methionine. C27 lines the [4Fe-4S] cluster pocket. GTP is bound at residue R63. Position 67 (G67) interacts with S-adenosyl-L-methionine. GTP is bound at residue T94. Residue S118 participates in S-adenosyl-L-methionine binding. K155 is a binding site for GTP. M189 is an S-adenosyl-L-methionine binding site. C249 and C252 together coordinate [4Fe-4S] cluster. 254 to 256 provides a ligand contact to GTP; sequence RVR. Residue C266 coordinates [4Fe-4S] cluster. A compositionally biased stretch (basic and acidic residues) spans 300 to 312; the sequence is KHDLLTDSHEESN. The interval 300–320 is disordered; it reads KHDLLTDSHEESNRGMSQIGG.

This sequence belongs to the radical SAM superfamily. MoaA family. In terms of assembly, monomer and homodimer. [4Fe-4S] cluster serves as cofactor.

It carries out the reaction GTP + AH2 + S-adenosyl-L-methionine = (8S)-3',8-cyclo-7,8-dihydroguanosine 5'-triphosphate + 5'-deoxyadenosine + L-methionine + A + H(+). It participates in cofactor biosynthesis; molybdopterin biosynthesis. Its function is as follows. Catalyzes the cyclization of GTP to (8S)-3',8-cyclo-7,8-dihydroguanosine 5'-triphosphate. The protein is GTP 3',8-cyclase of Alkaliphilus oremlandii (strain OhILAs) (Clostridium oremlandii (strain OhILAs)).